The following is a 245-amino-acid chain: Ribonuclease PH (245 aa).

Phosphate is bound by residues Arg86 and 124–126 (GTR).

The protein belongs to the RNase PH family. In terms of assembly, homohexameric ring arranged as a trimer of dimers.

It carries out the reaction tRNA(n+1) + phosphate = tRNA(n) + a ribonucleoside 5'-diphosphate. Phosphorolytic 3'-5' exoribonuclease that plays an important role in tRNA 3'-end maturation. Removes nucleotide residues following the 3'-CCA terminus of tRNAs; can also add nucleotides to the ends of RNA molecules by using nucleoside diphosphates as substrates, but this may not be physiologically important. Probably plays a role in initiation of 16S rRNA degradation (leading to ribosome degradation) during starvation. This is Ribonuclease PH from Bacillus cereus (strain ATCC 10987 / NRS 248).